The sequence spans 335 residues: UPF0353 protein MUL_1490 (335 aa).

A run of 2 helical transmembrane segments spans residues 18–38 (WFFL…VLQL) and 67–87 (IPAM…AGPT). The VWFA domain maps to 98-298 (VVMLVIDVSQ…SVYVSLQQQI (201 aa)). Residues 309 to 329 (MGWLRLGALVLVAAALAALLI) traverse the membrane as a helical segment.

It belongs to the UPF0353 family.

The protein localises to the cell membrane. The protein is UPF0353 protein MUL_1490 of Mycobacterium ulcerans (strain Agy99).